We begin with the raw amino-acid sequence, 670 residues long: Amyloid beta A4 precursor protein-binding family B member 1-interacting protein (670 aa).

A Phosphoserine modification is found at Ser-55. One can recognise a Ras-associating domain in the interval 179–266 (KKLVVKVHMD…KVLFLEKEER (88 aa)). Positions 313 to 422 (VPELEGALYL…WVMGIRIAKY (110 aa)) constitute a PH domain. Residues 449-653 (VGTPMPAQPS…PGAPGNSEQD (205 aa)) are disordered. The segment covering 456 to 475 (QPSTVSSGLKTGTSQPNGQM) has biased composition (polar residues). Residue Ser-532 is modified to Phosphoserine. Thr-534 is modified (phosphothreonine). Position 537 is a phosphoserine (Ser-537). Pro residues-rich tracts occupy residues 553-567 (PHPP…PPPP), 576-599 (LPPP…PPPA), 606-615 (LPPPPPPPPC), and 625-634 (PLPPKKPLVP).

Belongs to the MRL family. Interacts, through the N-terminal Pro-rich region, with the WW domain of APBB1. Interacts with RAP1A, PFN1, VASP and ENAH. As to expression, ubiquitously expressed with high expression in the hematopoietic system.

The protein localises to the cell membrane. It is found in the cell projection. The protein resides in the lamellipodium. It localises to the cell junction. Its subcellular location is the focal adhesion. The protein localises to the cytoplasm. It is found in the cytoskeleton. Its function is as follows. Appears to function in the signal transduction from Ras activation to actin cytoskeletal remodeling. Suppresses insulin-induced promoter activities through AP1 and SRE. Mediates Rap1-induced adhesion. This is Amyloid beta A4 precursor protein-binding family B member 1-interacting protein (Apbb1ip) from Mus musculus (Mouse).